A 318-amino-acid chain; its full sequence is L-malyl-CoA/beta-methylmalyl-CoA lyase (318 aa).

Residues Phe-19, Arg-24, Lys-30, and Arg-76 each contribute to the substrate site. Residues Glu-141 and Asp-168 each contribute to the Mg(2+) site. Substrate is bound by residues 167 to 168 (AD) and 251 to 252 (IH).

Belongs to the HpcH/HpaI aldolase family. In terms of assembly, homohexamer. Dimer of trimers. It depends on Mg(2+) as a cofactor. Requires Mn(2+) as cofactor.

It carries out the reaction (S)-malyl-CoA = glyoxylate + acetyl-CoA. It catalyses the reaction (2R,3S)-beta-methylmalyl-CoA = propanoyl-CoA + glyoxylate. Its function is as follows. Involved in the ethylmalonyl-CoA pathway for acetate assimilation. Catalyzes the reversible condensation of glyoxylate and acetyl-CoA to L-malyl-CoA and the reversible condensation of glyoxylate and propionyl-CoA to yield beta-methylmalyl-CoA. The polypeptide is L-malyl-CoA/beta-methylmalyl-CoA lyase (Cereibacter sphaeroides (strain ATCC 17025 / ATH 2.4.3) (Rhodobacter sphaeroides)).